The chain runs to 134 residues: Photosystem II assembly factor lipoprotein Psb27 (134 aa).

The signal sequence occupies residues 1–21 (MKRFWAMVCALFLSVSLLLTS). The N-palmitoyl cysteine moiety is linked to residue cysteine 22. Cysteine 22 carries S-diacylglycerol cysteine lipidation.

The protein belongs to the Psb27 family. As to quaternary structure, part of a photosystem II (PSII) assembly intermediate complex PSII-I; crystallized from a strain deleted of psbJ, it forms monomeric PSII before addition of the oxygen evolving complex. PSII-I includes 3 assembly factors not found in mature PSII (Psb27, Psb28 and Psb34). Binds to the lumenal side of PSII, adjacent to the CP43 (psbC) subunit.

It localises to the cellular thylakoid membrane. Plays a role in the repair and/or biogenesis of the calcium-manganese-oxide cluster on the lumenal face of the thylakoid membrane. Its presence in a photosystem II (PSII) preparation prevents binding of other extrinsic subunits PsbO, PsbU and PsbV, and thus assembly of calcium-manganese-oxide cluster. Psb27-containing complexes lack oxygen evolving activity and an oxidizable calcium-manganese-oxide cluster, but have a normal reaction center. This chain is Photosystem II assembly factor lipoprotein Psb27, found in Thermosynechococcus vestitus (strain NIES-2133 / IAM M-273 / BP-1).